A 146-amino-acid polypeptide reads, in one-letter code: Ankyrin repeat-containing protein P16F5.05c (146 aa).

ANK repeat units follow at residues Met-1 to Arg-31, Asn-35 to Ile-64, Ser-70 to Ile-99, and Tyr-103 to Ser-132.

It localises to the cytoplasm. Its subcellular location is the nucleus. The sequence is that of Ankyrin repeat-containing protein P16F5.05c from Schizosaccharomyces pombe (strain 972 / ATCC 24843) (Fission yeast).